A 1444-amino-acid polypeptide reads, in one-letter code: MGDGLDAVQMSGSSSSQGQPSSQAPSSFNPNPPETSNPTRPKRQTNQLQYLLKVVLKSLWKHQFAWPFHAPVDAVKLNLPDYYKIIKNPMDMGTIKKRLESAFYTSAQECIQDFNTMFTNCYIYNKPGDDIVLMAEALEKVFLTKISEMPQQEVEISTTAGKGRGRGRRDPDMNMKVGPVLEPLTASPQTRGLSNLTPGPQTRGPPQGPPTLPPQPIVQIQALPPRVPPSLPTIPLHAPQLGPPFSLGPTDCNPPAPIITAVPPPTQTALPPVHIQQSAAPPILQTPISIPNKRKSQKRKADTTTPTANDQLNESSPAESKSGKTLPRRDNTRPSKLPKKEAPDSQHHWTAAPGTPSPKQQEQLRYCSGIVKDMFAKKHAAYAWPFYKPVDVDTLGLHDYHDIIKHPMDLSTIKDKLETRQYREAQEFAADVRLMFSNCYKYNPPDHEVVAMARKLQDVFEMRFAKMPDEPEEMLAPAPAPVLHPAPVKTQPVMATASSSDTSSDSSSESESSTDDSEEERAQRLAELQEQLKAVHEQLAALSQPQASKPKKKEKEKKEKKKDKHKKKAGVMPALEEILEPPPALKPQGKPKNKDPLPKKSKKLSKKEGGKSNRSMAPPGAAPPTLQPVPGLDTEEDLGLTGGAAMAGMAAGEKCKPMSYEEKRQLSLDINKLPGDKLGRVVHIIQSREPSLKNSNPDEIEIDFETLKPSTLRELERYVSSCLRKKKKPAVPEKSMEAISAVKTKGTSSDSGSSSESSSSESEDSETGMASKPKKRGRGEGKKAHHQTTAPGMPLPQVPLQPQTPALQPSIQLKQQQPQHPSPAAYMPPPVTALEPSQLLENPFDPLAHFMHLPHHANDSSSPAPPHLNAHPPGGPVSPETHPFLNQHPILPSPALHNALPQQPSRPSNRAAPLPPKPLQQSTSQQQPPPQQTLVPPQQLQPQQQQPAPPQQQHLPHHPLHAPQQMRPRPLSPPTLTPQGLLSSQPPQMLLEDDEEPVPSMSLPMYLQHLQPNRLQATPTSLMQSLQSRPQPPGQPSLLQSVQVQSHLPPPQLPVQTQVQPQQPAPHQPSPQLSQHQARHMQQLGFPQGPLQTAQTQPGQHKVSMPSTKAQQIIQQQQATQHHSPRQHKADSYNSAHLRDNPSPLMMHSPQIPQYSLVHQSPSQDKKEPQRGPSALGGIKEEKLPPSPVMRGEPFSPAMRPESHKHPDSKPTMPGHSQQRADMKPLEMSRPVIRSSEQSGPPPSMQDKEKFKQEPKTPSAPKKVQDVKFKNMGSWASLAQKSSTTPSSGLKSSSDSFEQFRRAAREKEEREKALKAQVEQAEKDRLRKEQEKLRGRDEEDSIEPPRRPLEEPRRRQEPQQVQPPPQQHQTQAQAQTLNPAQSPSASQPTQAPPQSPASSQSALDQQREMARRREQERRRREAMAATIDMNFQSDLMAIFEENLF.

7 disordered regions span residues 1–44 (MGDG…PKRQ), 154–217 (VEIS…PQPI), 279–362 (AAPP…KQQE), 492–523 (PVMA…ERAQ), 540–645 (AALS…GGAA), 722–986 (CLRK…SSQP), and 1020–1422 (TSLM…RREA). Residues 11–27 (SGSSSSQGQPSSQAPSS) are compositionally biased toward low complexity. Residues 43–149 (RQTNQLQYLL…KVFLTKISEM (107 aa)) enclose the Bromo 1 domain. The segment covering 186–196 (ASPQTRGLSNL) has biased composition (polar residues). Residues 206-216 (PQGPPTLPPQP) show a composition bias toward pro residues. The segment covering 303 to 319 (TTTPTANDQLNESSPAE) has biased composition (polar residues). The segment covering 327-347 (PRRDNTRPSKLPKKEAPDSQH) has biased composition (basic and acidic residues). Residues 358 to 467 (PKQQEQLRYC…DVFEMRFAKM (110 aa)) enclose the Bromo 2 domain. Positions 498-511 (SSSDTSSDSSSESE) are enriched in low complexity. The tract at residues 498 to 517 (SSSDTSSDSSSESESSTDDS) is NPS region. A BID region region spans residues 538-610 (QLAALSQPQA…SKKLSKKEGG (73 aa)). Residues 549-569 (KPKKKEKEKKEKKKDKHKKKA) are compositionally biased toward basic residues. Residues 633-730 (DTEEDLGLTG…SCLRKKKKPA (98 aa)) form the NET domain. Composition is skewed to low complexity over residues 746 to 760 (GTSS…SSSS), 800 to 823 (LQPQ…HPSP), 919 to 954 (LQQS…QQQH), and 1036 to 1046 (PSLLQSVQVQS). A compositionally biased stretch (polar residues) spans 1090–1109 (PLQTAQTQPGQHKVSMPSTK). Positions 1110-1121 (AQQIIQQQQATQ) are enriched in low complexity. A C-terminal (CTD) region region spans residues 1126–1444 (RQHKADSYNS…LMAIFEENLF (319 aa)). The segment covering 1151 to 1163 (QIPQYSLVHQSPS) has biased composition (polar residues). Positions 1246–1255 (QDKEKFKQEP) are enriched in basic and acidic residues. The segment covering 1282 to 1296 (SSTTPSSGLKSSSDS) has biased composition (low complexity). A compositionally biased stretch (basic and acidic residues) spans 1298 to 1357 (EQFRRAAREKEEREKALKAQVEQAEKDRLRKEQEKLRGRDEEDSIEPPRRPLEEPRRRQE). Low complexity predominate over residues 1367-1389 (QHQTQAQAQTLNPAQSPSASQPT). The span at 1405 to 1422 (QQREMARRREQERRRREA) shows a compositional bias: basic and acidic residues.

It belongs to the BET family. In terms of tissue distribution, widely expressed.

It is found in the nucleus. The protein resides in the chromosome. Functionally, chromatin reader protein that recognizes and binds acetylated histones and plays a key role in transmission of epigenetic memory across cell divisions and transcription regulation. Remains associated with acetylated chromatin throughout the entire cell cycle and provides epigenetic memory for postmitotic G1 gene transcription by preserving acetylated chromatin status and maintaining high-order chromatin structure. During interphase, plays a key role in regulating the transcription of signal-inducible genes by associating with the P-TEFb complex and recruiting it to promoters. In Danio rerio (Zebrafish), this protein is Bromodomain-containing protein 4 (brd4).